We begin with the raw amino-acid sequence, 106 residues long: Iron-sulfur cluster assembly protein CyaY (106 aa).

It belongs to the frataxin family.

In terms of biological role, involved in iron-sulfur (Fe-S) cluster assembly. May act as a regulator of Fe-S biogenesis. The polypeptide is Iron-sulfur cluster assembly protein CyaY (Escherichia fergusonii (strain ATCC 35469 / DSM 13698 / CCUG 18766 / IAM 14443 / JCM 21226 / LMG 7866 / NBRC 102419 / NCTC 12128 / CDC 0568-73)).